A 109-amino-acid chain; its full sequence is Nucleoid-associated protein VC_1055 (109 aa).

Positions 1–22 (MFGKGGMGNLMKQAQQMQERMQ) are disordered.

The protein belongs to the YbaB/EbfC family. In terms of assembly, homodimer.

Its subcellular location is the cytoplasm. The protein localises to the nucleoid. Binds to DNA and alters its conformation. May be involved in regulation of gene expression, nucleoid organization and DNA protection. This Vibrio cholerae serotype O1 (strain ATCC 39315 / El Tor Inaba N16961) protein is Nucleoid-associated protein VC_1055.